A 376-amino-acid chain; its full sequence is N-acetyldiaminopimelate deacetylase (376 aa).

Residue Asp-69 is part of the active site. Glu-128 acts as the Proton acceptor in catalysis.

It belongs to the peptidase M20A family. N-acetyldiaminopimelate deacetylase subfamily.

The catalysed reaction is N-acetyl-(2S,6S)-2,6-diaminopimelate + H2O = (2S,6S)-2,6-diaminopimelate + acetate. It functions in the pathway amino-acid biosynthesis; L-lysine biosynthesis via DAP pathway; LL-2,6-diaminopimelate from (S)-tetrahydrodipicolinate (acetylase route): step 3/3. In terms of biological role, catalyzes the conversion of N-acetyl-diaminopimelate to diaminopimelate and acetate. In Streptococcus pneumoniae (strain 70585), this protein is N-acetyldiaminopimelate deacetylase.